Consider the following 378-residue polypeptide: Probable G-protein coupled receptor frpr-1 (378 aa).

7 helical membrane passes run 47–67, 85–105, 120–140, 180–200, 243–263, 277–297, and 315–337; these read LVVI…GNAL, LFAL…LFFL, AVLS…SVFI, VIVC…YNSP, TIVM…AIVI, IITL…PLTV, and SNLM…GSNF.

This sequence belongs to the G-protein coupled receptor 1 family.

Its subcellular location is the cell membrane. In Caenorhabditis elegans, this protein is Probable G-protein coupled receptor frpr-1.